A 185-amino-acid chain; its full sequence is Large ribosomal subunit protein uL5 (185 aa).

Belongs to the universal ribosomal protein uL5 family. Part of the 50S ribosomal subunit; part of the 5S rRNA/L5/L18/L25 subcomplex. Contacts the 5S rRNA and the P site tRNA. Forms a bridge to the 30S subunit in the 70S ribosome.

Functionally, this is one of the proteins that bind and probably mediate the attachment of the 5S RNA into the large ribosomal subunit, where it forms part of the central protuberance. In the 70S ribosome it contacts protein S13 of the 30S subunit (bridge B1b), connecting the 2 subunits; this bridge is implicated in subunit movement. Contacts the P site tRNA; the 5S rRNA and some of its associated proteins might help stabilize positioning of ribosome-bound tRNAs. This is Large ribosomal subunit protein uL5 from Brucella abortus (strain 2308).